The following is a 146-amino-acid chain: U-scoloptoxin(16)-Er1a (146 aa).

The signal sequence occupies residues 1–26 (MNTVSVVQFLAVGCAVFVLYGRGVFA).

Belongs to the scoloptoxin-16 family. In terms of processing, contains 4 disulfide bonds. In terms of tissue distribution, expressed by the venom gland.

It localises to the secreted. This is U-scoloptoxin(16)-Er1a from Ethmostigmus rubripes (Giant centipede).